A 589-amino-acid chain; its full sequence is ATP-dependent lipid A-core flippase (589 aa).

The next 6 helical transmembrane spans lie at 33-53 (VLAIVCMVLAAAGQAAFAWII), 70-90 (LWVPATLVGIFLFHGVTTFAS), 148-168 (VVVLVRDTFTVIFLLAYMTYL), 170-190 (GWLVMIVFGLGPLVAVVVTAA), 262-282 (LGAVIALAIILYLATMDVILE), and 283-303 (TISPGGMISFIAAMLLMLPPL). One can recognise an ABC transmembrane type-1 domain in the interval 33–315 (VLAIVCMVLA…VIGVNAEIQK (283 aa)). The ABC transporter domain occupies 347–583 (IEFDRVAFRY…NGHYASLHRV (237 aa)). 381 to 388 (GRSGSGKT) contributes to the ATP binding site.

The protein belongs to the ABC transporter superfamily. Lipid exporter (TC 3.A.1.106) family. In terms of assembly, homodimer.

Its subcellular location is the cell inner membrane. It carries out the reaction ATP + H2O + lipid A-core oligosaccharideSide 1 = ADP + phosphate + lipid A-core oligosaccharideSide 2.. Its function is as follows. Involved in lipopolysaccharide (LPS) biosynthesis. Translocates lipid A-core from the inner to the outer leaflet of the inner membrane. Transmembrane domains (TMD) form a pore in the inner membrane and the ATP-binding domain (NBD) is responsible for energy generation. This chain is ATP-dependent lipid A-core flippase, found in Alkalilimnicola ehrlichii (strain ATCC BAA-1101 / DSM 17681 / MLHE-1).